A 121-amino-acid chain; its full sequence is Small ribosomal subunit protein uS13 (121 aa).

A disordered region spans residues 97 to 121; sequence VRGQRTRTNARTRRGARKTVAGKKK. Positions 100 to 121 are enriched in basic residues; that stretch reads QRTRTNARTRRGARKTVAGKKK.

This sequence belongs to the universal ribosomal protein uS13 family. Part of the 30S ribosomal subunit. Forms a loose heterodimer with protein S19. Forms two bridges to the 50S subunit in the 70S ribosome.

In terms of biological role, located at the top of the head of the 30S subunit, it contacts several helices of the 16S rRNA. In the 70S ribosome it contacts the 23S rRNA (bridge B1a) and protein L5 of the 50S subunit (bridge B1b), connecting the 2 subunits; these bridges are implicated in subunit movement. Contacts the tRNAs in the A and P-sites. This Prochlorococcus marinus (strain MIT 9313) protein is Small ribosomal subunit protein uS13.